Consider the following 506-residue polypeptide: MNKYVVSTILVMISTFFSRIMGFVKIKIFSYYFGANLDADIFNYVFNIPNNLRKILSEGAMTSAFLPEFTHEKNKSHEKAVSFFRTVITFNIISIGLIVLVMIIFAKPIMYFISYYRGENLIFASSVFGYLVLYILLISLSSIFVSVLNSYKIFFIPSFSPIMLSFGIILSIFLFYGRFGIYSAVIGVIFGGFLQFLIPFANCLMIGFAWKPTFYFREKVFLNFLTRWLRMIFGFSISIITQQISFALASTLEIGSVSILSNAVVYYQLPVGIFYISIATVIFPKMAEHAVLGNNIKLNALLVDGIKILLLIFIPVSFLMFIWSDYILNLFLMGGKFSIYDTQKTASVLKCFLLGLLFYSMFGFFQKYYFSIRDAKTPFYLSVLFSILDIAISVFGINYYGLNALALAQSISFMICVIVFYFIILKRGVKIDLIEILFVLLKSIITLFPLYAIYFFFEKFQWDVGFSFKNLYFLMAAGIVSIFVLFICYSVLGINKLFRYIRRDAL.

The next 13 helical transmembrane spans lie at tyrosine 4–valine 24, threonine 86–alanine 106, valine 127–valine 147, isoleucine 153–phenylalanine 173, isoleucine 181–alanine 201, isoleucine 232–leucine 252, alanine 263–phenylalanine 283, isoleucine 308–leucine 328, threonine 345–phenylalanine 365, threonine 377–isoleucine 397, leucine 405–leucine 425, isoleucine 436–phenylalanine 456, and leucine 474–isoleucine 494.

The protein belongs to the MurJ/MviN family.

The protein localises to the cell inner membrane. It functions in the pathway cell wall biogenesis; peptidoglycan biosynthesis. In terms of biological role, involved in peptidoglycan biosynthesis. Transports lipid-linked peptidoglycan precursors from the inner to the outer leaflet of the cytoplasmic membrane. This is Probable lipid II flippase MurJ from Borreliella burgdorferi (strain ATCC 35210 / DSM 4680 / CIP 102532 / B31) (Borrelia burgdorferi).